The primary structure comprises 137 residues: Allergen Ste b 1 (137 aa).

The first 18 residues, 1–18 (ALFAAAGLAAAAPFETRQ), serve as a signal peptide directing secretion. The region spanning 28 to 137 (QGDYVWKISE…PKDVICQGAS (110 aa)) is the AA1-like domain. 2 disulfide bridges follow: Cys67-Cys82 and Cys121-Cys133.

This sequence belongs to the ALTA1 family. In terms of assembly, homodimer; disulfide-linked.

The protein resides in the secreted. The chain is Allergen Ste b 1 (alta1) from Stemphylium botryosum (Black stalk rot fungus).